The sequence spans 61 residues: Small ribosomal subunit protein uS14 (61 aa).

Residues cysteine 24, cysteine 27, cysteine 40, and cysteine 43 each coordinate Zn(2+).

Belongs to the universal ribosomal protein uS14 family. Zinc-binding uS14 subfamily. As to quaternary structure, part of the 30S ribosomal subunit. Contacts proteins S3 and S10. It depends on Zn(2+) as a cofactor.

In terms of biological role, binds 16S rRNA, required for the assembly of 30S particles and may also be responsible for determining the conformation of the 16S rRNA at the A site. The chain is Small ribosomal subunit protein uS14 from Elusimicrobium minutum (strain Pei191).